Reading from the N-terminus, the 156-residue chain is Large ribosomal subunit protein uL22 (156 aa).

It belongs to the universal ribosomal protein uL22 family. Part of the 50S ribosomal subunit.

In terms of biological role, this protein binds specifically to 23S rRNA. It makes multiple contacts with different domains of the 23S rRNA in the assembled 50S subunit and ribosome. The globular domain of the protein is located near the polypeptide exit tunnel on the outside of the subunit, while an extended beta-hairpin is found that lines the wall of the exit tunnel in the center of the 70S ribosome. The protein is Large ribosomal subunit protein uL22 of Methanocaldococcus jannaschii (strain ATCC 43067 / DSM 2661 / JAL-1 / JCM 10045 / NBRC 100440) (Methanococcus jannaschii).